The sequence spans 699 residues: Conditioned medium factor (699 aa).

An N-terminal signal peptide occupies residues 1 to 18 (MRLLLLLILIITINFSYG). Asn-130, Asn-283, Asn-346, and Asn-430 each carry an N-linked (GlcNAc...) asparagine glycan. The tract at residues 680-699 (SPQQTTNTEYNKEMSSNSVW) is disordered.

Post-translationally, N- and O-glycosylated. In terms of processing, the N-terminus is blocked.

Its function is as follows. Involved in cell density sensing and might synchronize the onset of development by triggering aggregation when a majority of the cells in a given area have starved. This chain is Conditioned medium factor (cmfA), found in Dictyostelium discoideum (Social amoeba).